The sequence spans 486 residues: Glutamyl-tRNA(Gln) amidotransferase subunit A (486 aa).

Active-site charge relay system residues include Lys-78 and Ser-153. Residue Ser-177 is the Acyl-ester intermediate of the active site.

The protein belongs to the amidase family. GatA subfamily. In terms of assembly, heterotrimer of A, B and C subunits.

It carries out the reaction L-glutamyl-tRNA(Gln) + L-glutamine + ATP + H2O = L-glutaminyl-tRNA(Gln) + L-glutamate + ADP + phosphate + H(+). Functionally, allows the formation of correctly charged Gln-tRNA(Gln) through the transamidation of misacylated Glu-tRNA(Gln) in organisms which lack glutaminyl-tRNA synthetase. The reaction takes place in the presence of glutamine and ATP through an activated gamma-phospho-Glu-tRNA(Gln). In Syntrophobacter fumaroxidans (strain DSM 10017 / MPOB), this protein is Glutamyl-tRNA(Gln) amidotransferase subunit A.